The following is a 99-amino-acid chain: Nucleoid-associated protein EbfC (99 aa).

It belongs to the YbaB/EbfC family. As to quaternary structure, homodimer.

It localises to the cytoplasm. The protein resides in the nucleoid. Functionally, binds to DNA and alters its conformation. May be involved in regulation of gene expression, nucleoid organization and DNA protection. The polypeptide is Nucleoid-associated protein EbfC (Borrelia turicatae (strain 91E135)).